Here is a 380-residue protein sequence, read N- to C-terminus: Histidinol-phosphate aminotransferase (380 aa).

Residue Lys235 is modified to N6-(pyridoxal phosphate)lysine.

It belongs to the class-II pyridoxal-phosphate-dependent aminotransferase family. Histidinol-phosphate aminotransferase subfamily. In terms of assembly, homodimer. Pyridoxal 5'-phosphate serves as cofactor.

The enzyme catalyses L-histidinol phosphate + 2-oxoglutarate = 3-(imidazol-4-yl)-2-oxopropyl phosphate + L-glutamate. It functions in the pathway amino-acid biosynthesis; L-histidine biosynthesis; L-histidine from 5-phospho-alpha-D-ribose 1-diphosphate: step 7/9. This is Histidinol-phosphate aminotransferase from Rhodococcus opacus (strain B4).